The chain runs to 459 residues: Vacuolar amino acid transporter 5 (459 aa).

The next 8 helical transmembrane spans lie at 8–28 (GVLT…PFAF), 33–53 (LMPG…GLLL), 82–102 (VVFD…YLII), 131–151 (FLDR…PLCF), 161–181 (ASMI…YHFV), 206–226 (LTTL…FSVI), 240–260 (IPIF…GTGY), and 278–298 (SIST…AFPL). A compositionally biased stretch (polar residues) spans 335-351 (FNSEDPQEAPTQQNNEE). A disordered region spans residues 335 to 354 (FNSEDPQEAPTQQNNEEPNL). 3 helical membrane passes run 364–384 (IITL…TSLA), 386–406 (VLAI…PGLF), and 434–454 (LSLF…IVFL).

This sequence belongs to the amino acid/polyamine transporter 2 family.

It localises to the vacuole membrane. Probable amino acid transporter of unknown specificity. The polypeptide is Vacuolar amino acid transporter 5 (AVT5) (Saccharomyces cerevisiae (strain ATCC 204508 / S288c) (Baker's yeast)).